The following is a 320-amino-acid chain: Malate dehydrogenase (320 aa).

Residues 10-15 (GAGQIG) and Asp-34 contribute to the NAD(+) site. Positions 83 and 89 each coordinate substrate. NAD(+) is bound by residues Asn-96 and 119–121 (ITN). Residues Asn-121 and Arg-152 each coordinate substrate. Catalysis depends on His-176, which acts as the Proton acceptor.

This sequence belongs to the LDH/MDH superfamily. MDH type 3 family.

It catalyses the reaction (S)-malate + NAD(+) = oxaloacetate + NADH + H(+). Its function is as follows. Catalyzes the reversible oxidation of malate to oxaloacetate. This is Malate dehydrogenase from Cereibacter sphaeroides (strain ATCC 17025 / ATH 2.4.3) (Rhodobacter sphaeroides).